The following is a 142-amino-acid chain: Small ribosomal subunit protein bS6 (142 aa).

The disordered stretch occupies residues Asn-110–Glu-142.

It belongs to the bacterial ribosomal protein bS6 family.

Functionally, binds together with bS18 to 16S ribosomal RNA. The sequence is that of Small ribosomal subunit protein bS6 from Helicobacter pylori (strain G27).